Reading from the N-terminus, the 417-residue chain is Serine--tRNA ligase (417 aa).

Position 226 to 228 (226 to 228 (TSE)) interacts with L-serine. ATP-binding positions include 257 to 259 (RRE) and V273. E280 serves as a coordination point for L-serine. 344–347 (ELTS) serves as a coordination point for ATP. Residue T379 coordinates L-serine.

This sequence belongs to the class-II aminoacyl-tRNA synthetase family. Type-1 seryl-tRNA synthetase subfamily. In terms of assembly, homodimer. The tRNA molecule binds across the dimer.

Its subcellular location is the cytoplasm. The enzyme catalyses tRNA(Ser) + L-serine + ATP = L-seryl-tRNA(Ser) + AMP + diphosphate + H(+). It carries out the reaction tRNA(Sec) + L-serine + ATP = L-seryl-tRNA(Sec) + AMP + diphosphate + H(+). The protein operates within aminoacyl-tRNA biosynthesis; selenocysteinyl-tRNA(Sec) biosynthesis; L-seryl-tRNA(Sec) from L-serine and tRNA(Sec): step 1/1. Functionally, catalyzes the attachment of serine to tRNA(Ser). Is also able to aminoacylate tRNA(Sec) with serine, to form the misacylated tRNA L-seryl-tRNA(Sec), which will be further converted into selenocysteinyl-tRNA(Sec). The chain is Serine--tRNA ligase from Mycolicibacterium smegmatis (strain ATCC 700084 / mc(2)155) (Mycobacterium smegmatis).